The following is a 701-amino-acid chain: MPRKTPIERYRNIGISAHIDAGKTTTTERILFYTGVSHKIGEVHDGAATMDWMEQEQERGITITSAATTAFWKGMAGNYPEHRINIIDTPGHVDFTIEVERSMRVLDGACMVYDSVGGVQPQSETVWRQANKYKVPRIAFVNKMDRIGADFFRVQKQIGERLKGVAVPIQIPIGAEDHFQGVVDLVKMKAIVWDDESQGVKFTYEDIPANLAELAHEWREKMVEAAAEASEELLEKYLHDHESLTEDEIKAALRKRTIANEIVPMLCGSAFKNKGVQAMLDAVIDYLPSPADVPAILGHDLHDKEAERHPNDEDPFSSLAFKIMTDPFVGQLIFFRVYSGVVESGDTVLNATKDKKERLGRILQMHANERKEIKEVRAGDIAAAVGLKEATTGDTLCDPAHPIVLERMIFPEPVISQAVEPKTKADQEKMGLALNRLAQEDPSFRVQTDEESGQTIISGMGELHLEILVDRMKREFGVEATVGKPQVAYRETVRTPAKDVEGKFVKQSGGRGQYGHAVITLEPNPGKGYEFVDAIKGGVIPREYIPSVDKGIQETLKSGVLAGYPVVDVKVTLTFGSYHDVDSNENAFRMAGSMAFKEAMRRAKPVLLEPMMAVEVETPEDFMGNVMGDLSSRRGIVQGMEDIAGGGGKLVRAEVPLAEMFGYSTSLRSATQGRATYTMEFKQYAETPANVSEGVISAKVK.

Residues 8-291 enclose the tr-type G domain; sequence ERYRNIGISA…AVIDYLPSPA (284 aa). Residues 17–24, 88–92, and 142–145 each bind GTP; these read AHIDAGKT, DTPGH, and NKMD.

It belongs to the TRAFAC class translation factor GTPase superfamily. Classic translation factor GTPase family. EF-G/EF-2 subfamily.

It localises to the cytoplasm. Functionally, catalyzes the GTP-dependent ribosomal translocation step during translation elongation. During this step, the ribosome changes from the pre-translocational (PRE) to the post-translocational (POST) state as the newly formed A-site-bound peptidyl-tRNA and P-site-bound deacylated tRNA move to the P and E sites, respectively. Catalyzes the coordinated movement of the two tRNA molecules, the mRNA and conformational changes in the ribosome. This Burkholderia lata (strain ATCC 17760 / DSM 23089 / LMG 22485 / NCIMB 9086 / R18194 / 383) protein is Elongation factor G 2.